The following is a 156-amino-acid chain: Small ribosomal subunit protein uS7 (156 aa).

The protein belongs to the universal ribosomal protein uS7 family. As to quaternary structure, part of the 30S ribosomal subunit. Contacts proteins S9 and S11.

In terms of biological role, one of the primary rRNA binding proteins, it binds directly to 16S rRNA where it nucleates assembly of the head domain of the 30S subunit. Is located at the subunit interface close to the decoding center, probably blocks exit of the E-site tRNA. This is Small ribosomal subunit protein uS7 from Lactobacillus johnsonii (strain CNCM I-12250 / La1 / NCC 533).